The primary structure comprises 247 residues: Geranylgeranylglyceryl phosphate synthase (247 aa).

Residues D24 and S53 each contribute to the Mg(2+) site. Sn-glycerol 1-phosphate is bound by residues 172 to 178 (YLEAGSG), 203 to 204 (GG), and 225 to 226 (GT).

Belongs to the GGGP/HepGP synthase family. Group II subfamily. It depends on Mg(2+) as a cofactor.

It localises to the cytoplasm. The catalysed reaction is sn-glycerol 1-phosphate + (2E,6E,10E)-geranylgeranyl diphosphate = sn-3-O-(geranylgeranyl)glycerol 1-phosphate + diphosphate. It participates in membrane lipid metabolism; glycerophospholipid metabolism. Functionally, prenyltransferase that catalyzes the transfer of the geranylgeranyl moiety of geranylgeranyl diphosphate (GGPP) to the C3 hydroxyl of sn-glycerol-1-phosphate (G1P). This reaction is the first ether-bond-formation step in the biosynthesis of archaeal membrane lipids. This is Geranylgeranylglyceryl phosphate synthase from Cenarchaeum symbiosum (strain A).